Consider the following 351-residue polypeptide: ABC transporter nucleoside-binding protein BmpA (351 aa).

A signal peptide spans 1-21 (MKKRVIAVSAIALASVAVLAG). The N-palmitoyl cysteine moiety is linked to residue C22. A lipid anchor (S-diacylglycerol cysteine) is attached at C22.

The protein belongs to the BMP lipoprotein family. As to quaternary structure, the complex is composed of two ATP-binding proteins (NupA), two transmembrane proteins (NupB and NupC) and a solute-binding protein (BmpA).

The protein resides in the cell membrane. In terms of biological role, part of an ABC transporter complex involved in the uptake of all common nucleosides. This chain is ABC transporter nucleoside-binding protein BmpA, found in Lactococcus lactis subsp. cremoris (strain MG1363).